A 121-amino-acid chain; its full sequence is UPF0295 protein OB0906 (121 aa).

Helical transmembrane passes span 14 to 34 (IRTF…GGIL) and 43 to 63 (VIFF…YVWI).

This sequence belongs to the UPF0295 family.

It localises to the cell membrane. This chain is UPF0295 protein OB0906, found in Oceanobacillus iheyensis (strain DSM 14371 / CIP 107618 / JCM 11309 / KCTC 3954 / HTE831).